The primary structure comprises 203 residues: Glycerol-3-phosphate acyltransferase (203 aa).

The next 5 membrane-spanning stretches (helical) occupy residues 10–30, 59–79, 87–107, 116–136, and 168–188; these read LLAL…GLLI, PAAA…VILA, AAQI…YLKF, FFGT…AIWL, and LVVL…ENII.

This sequence belongs to the PlsY family. In terms of assembly, probably interacts with PlsX.

The protein resides in the cell inner membrane. It carries out the reaction an acyl phosphate + sn-glycerol 3-phosphate = a 1-acyl-sn-glycero-3-phosphate + phosphate. It participates in lipid metabolism; phospholipid metabolism. Its function is as follows. Catalyzes the transfer of an acyl group from acyl-phosphate (acyl-PO(4)) to glycerol-3-phosphate (G3P) to form lysophosphatidic acid (LPA). This enzyme utilizes acyl-phosphate as fatty acyl donor, but not acyl-CoA or acyl-ACP. This Dinoroseobacter shibae (strain DSM 16493 / NCIMB 14021 / DFL 12) protein is Glycerol-3-phosphate acyltransferase.